A 200-amino-acid chain; its full sequence is Glycerol-3-phosphate acyltransferase (200 aa).

The next 5 membrane-spanning stretches (helical) occupy residues 3–23 (YIYSIFIGYFFGAIPFSFFIA), 50–70 (FYGALAFFFDIFKAYIAVFLV), 75–95 (IKFMLIAGTMAVLGHCYSIFL), 109–129 (VFLAVYPWSGLVFFGVWLFIV), and 134–154 (YVSLASMIGLIFASIFVFFAG).

Belongs to the PlsY family. As to quaternary structure, probably interacts with PlsX.

It localises to the cell inner membrane. It catalyses the reaction an acyl phosphate + sn-glycerol 3-phosphate = a 1-acyl-sn-glycero-3-phosphate + phosphate. It functions in the pathway lipid metabolism; phospholipid metabolism. Functionally, catalyzes the transfer of an acyl group from acyl-phosphate (acyl-PO(4)) to glycerol-3-phosphate (G3P) to form lysophosphatidic acid (LPA). This enzyme utilizes acyl-phosphate as fatty acyl donor, but not acyl-CoA or acyl-ACP. This is Glycerol-3-phosphate acyltransferase from Thermosipho melanesiensis (strain DSM 12029 / CIP 104789 / BI429).